A 72-amino-acid chain; its full sequence is Toxin Acra II-1 (72 aa).

The LCN-type CS-alpha/beta domain maps to 3 to 67 (VPGNYPLNTY…VWNAAKNYCK (65 aa)). 3 cysteine pairs are disulfide-bonded: C18/C41, C27/C46, and C31/C48.

This sequence belongs to the long (3 C-C) scorpion toxin superfamily. Sodium channel inhibitor family. Beta subfamily. Expressed by the venom gland.

It localises to the secreted. Binds to sodium channels (Nav) and affects the channel activation process. This Androctonus crassicauda (Arabian fat-tailed scorpion) protein is Toxin Acra II-1.